We begin with the raw amino-acid sequence, 668 residues long: UvrABC system protein B (668 aa).

In terms of domain architecture, Helicase ATP-binding spans 25–176 (THLQSGHSRQ…DQRQLLRNLA (152 aa)). Position 38–45 (38–45 (GATGTGKT)) interacts with ATP. The short motif at 91 to 114 (YYDYYQPEAYIPVTDTFIEKTASI) is the Beta-hairpin element. In terms of domain architecture, Helicase C-terminal spans 429–591 (QVDDLLAEIQ…ITPQPVKKGS (163 aa)). A UVR domain is found at 626-661 (PELITQLEAQMKEAAKNLEFEEAAKYRDRIKNLRSK).

Belongs to the UvrB family. In terms of assembly, forms a heterotetramer with UvrA during the search for lesions. Interacts with UvrC in an incision complex.

It localises to the cytoplasm. Functionally, the UvrABC repair system catalyzes the recognition and processing of DNA lesions. A damage recognition complex composed of 2 UvrA and 2 UvrB subunits scans DNA for abnormalities. Upon binding of the UvrA(2)B(2) complex to a putative damaged site, the DNA wraps around one UvrB monomer. DNA wrap is dependent on ATP binding by UvrB and probably causes local melting of the DNA helix, facilitating insertion of UvrB beta-hairpin between the DNA strands. Then UvrB probes one DNA strand for the presence of a lesion. If a lesion is found the UvrA subunits dissociate and the UvrB-DNA preincision complex is formed. This complex is subsequently bound by UvrC and the second UvrB is released. If no lesion is found, the DNA wraps around the other UvrB subunit that will check the other stand for damage. This is UvrABC system protein B from Acaryochloris marina (strain MBIC 11017).